The following is a 480-amino-acid chain: Iroquois-class homeodomain protein IRX-1 (480 aa).

The homeobox; TALE-type DNA-binding region spans 127-189 (DPGRPKNATR…NARRRLKKEN (63 aa)). Disordered stretches follow at residues 190 to 285 (KVTW…LGLV), 318 to 354 (SLAETATSPDGAPKASPPPPSSHASAHGPPSGSPLQH), and 401 to 480 (PHGP…LPSA). Residues 210–232 (TEGDPEKAEDDEEIDLESIDIDQ) show a composition bias toward acidic residues. Residue Ser241 is modified to Phosphoserine. Over residues 254-263 (ARVAPPASAR) the composition is skewed to low complexity. Residues 264–280 (DQSSPLSAAETLKSQDS) show a composition bias toward polar residues. Residues 339–351 (SHASAHGPPSGSP) are compositionally biased toward low complexity.

Belongs to the TALE/IRO homeobox family. In terms of tissue distribution, expressed in specific and overlapping patterns with Irx1 and Irx2 in the developing and adult metanephric kidney. In the adult metanephros, renal expression is found in the loop of Henle in the S3 proximal tubule segment and in the thick ascending limb (TAL) of the distal tubule.

The protein resides in the nucleus. This is Iroquois-class homeodomain protein IRX-1 (Irx1) from Mus musculus (Mouse).